The chain runs to 396 residues: Capsular polysaccharide biosynthesis protein CapF (396 aa).

The next 12 membrane-spanning stretches (helical) occupy residues 7–27 (YMFV…LVIV), 41–61 (ALVI…SVIV), 74–94 (AILS…YVLG), 101–121 (ILIV…YGIY), 129–149 (LLGI…YIIY), 153–173 (HNLN…FAII), 198–218 (IFIL…NTGI), 232–252 (LGIF…ANSI), 279–299 (MVFI…FLGE), 315–335 (IILI…FLGT), 351–371 (LILL…YSLL), and 372–392 (GAAL…YYFY).

This sequence belongs to the polysaccharide synthase family.

The protein localises to the cell membrane. It functions in the pathway capsule biogenesis; capsule polysaccharide biosynthesis. In terms of biological role, required for the biosynthesis of type 1 capsular polysaccharide. The polypeptide is Capsular polysaccharide biosynthesis protein CapF (capF) (Staphylococcus aureus).